The sequence spans 159 residues: Cytochrome c-type biogenesis protein CcmE (159 aa).

The Cytoplasmic portion of the chain corresponds to Met1–Arg8. A helical; Signal-anchor for type II membrane protein transmembrane segment spans residues Leu9–Ala29. Residues Leu30 to Ser159 lie on the Periplasmic side of the membrane. Heme contacts are provided by His130 and Tyr134. Residues Tyr134–His147 are compositionally biased toward basic and acidic residues. The tract at residues Tyr134–Ser159 is disordered.

It belongs to the CcmE/CycJ family.

The protein localises to the cell inner membrane. Its function is as follows. Heme chaperone required for the biogenesis of c-type cytochromes. Transiently binds heme delivered by CcmC and transfers the heme to apo-cytochromes in a process facilitated by CcmF and CcmH. The chain is Cytochrome c-type biogenesis protein CcmE from Escherichia coli (strain SMS-3-5 / SECEC).